A 235-amino-acid polypeptide reads, in one-letter code: Carboxy-S-adenosyl-L-methionine synthase (235 aa).

S-adenosyl-L-methionine is bound by residues Tyr35, 60 to 62, 83 to 84, Asn124, and Arg191; these read GCS and DN.

This sequence belongs to the class I-like SAM-binding methyltransferase superfamily. Cx-SAM synthase family. In terms of assembly, homodimer.

It catalyses the reaction prephenate + S-adenosyl-L-methionine = carboxy-S-adenosyl-L-methionine + 3-phenylpyruvate + H2O. In terms of biological role, catalyzes the conversion of S-adenosyl-L-methionine (SAM) to carboxy-S-adenosyl-L-methionine (Cx-SAM). In Campylobacter jejuni subsp. jejuni serotype O:23/36 (strain 81-176), this protein is Carboxy-S-adenosyl-L-methionine synthase.